Reading from the N-terminus, the 271-residue chain is Urease accessory protein UreD (271 aa).

Belongs to the UreD family. As to quaternary structure, ureD, UreF and UreG form a complex that acts as a GTP-hydrolysis-dependent molecular chaperone, activating the urease apoprotein by helping to assemble the nickel containing metallocenter of UreC. The UreE protein probably delivers the nickel.

The protein localises to the cytoplasm. Functionally, required for maturation of urease via the functional incorporation of the urease nickel metallocenter. The chain is Urease accessory protein UreD from Haemophilus influenzae (strain 86-028NP).